A 205-amino-acid polypeptide reads, in one-letter code: Guanylate kinase (205 aa).

In terms of domain architecture, Guanylate kinase-like spans 7–185 (GNIFIISAAS…AEEDLRHIVN (179 aa)). ATP is bound at residue 14 to 21 (AASGTGKT).

Belongs to the guanylate kinase family.

It is found in the cytoplasm. The enzyme catalyses GMP + ATP = GDP + ADP. Functionally, essential for recycling GMP and indirectly, cGMP. This chain is Guanylate kinase (gmk), found in Neisseria meningitidis serogroup B (strain ATCC BAA-335 / MC58).